Consider the following 140-residue polypeptide: Non-specific lipid transfer protein GPI-anchored 33 (140 aa).

The signal sequence occupies residues 1 to 27 (MAYTNKVTISAAVATMMLFLAVTIVDA). Intrachain disulfides connect Cys40–Cys80, Cys52–Cys64, Cys65–Cys104, and Cys78–Cys112. A glycan (N-linked (GlcNAc...) asparagine) is linked at Asn91. A lipid anchor (GPI-anchor amidated glycine) is attached at Gly115. Residues 116–140 (DASGGSTNKIAASMVLLGLVASLFF) constitute a propeptide, removed in mature form.

This sequence belongs to the plant LTP family.

It is found in the cell membrane. Its function is as follows. Probable lipid transfer protein. This is Non-specific lipid transfer protein GPI-anchored 33 from Arabidopsis thaliana (Mouse-ear cress).